The primary structure comprises 401 residues: Odorant receptor 88a (401 aa).

Over 1–26 (MKPTEIKKPYRMEEFLRPQMFQEVAQ) the chain is Cytoplasmic. A helical transmembrane segment spans residues 27–47 (MVHFQWRRNPVDNSMVNASMV). Over 48 to 52 (PFCLS) the chain is Extracellular. The helical transmembrane segment at 53-73 (AFLNVLFFGCNGWDIIGHFWL) threads the bilayer. The Cytoplasmic segment spans residues 74–142 (GHPANQNPPV…NFWQRYRFIR (69 aa)). The helical transmembrane segment at 143-163 (IYSHLGGPMFCVVPLALFLLT) threads the bilayer. The Extracellular segment spans residues 164 to 191 (HEGKDTPVAQHEQLLGGWLPCGVRKDPN). A helical membrane pass occupies residues 192–212 (FYLLVWSFDLMCTTCGVSFFV). Residues 213–277 (TFDNLFNVMQ…LCRKYNDIFK (65 aa)) are Cytoplasmic-facing. The helical transmembrane segment at 278-298 (VAFLVSNFVGAGSLCFYLFML) threads the bilayer. The Extracellular segment spans residues 299 to 303 (SETSD). Residues 304–324 (VLIIAQYILPTLVLVGFTFEI) form a helical membrane-spanning segment. The Cytoplasmic portion of the chain corresponds to 325 to 370 (CLRGTQLEKASEGLESSLRSQEWYLGSRRYRKFYLLWTQYCQRTQQ). A helical transmembrane segment spans residues 371-391 (LGAFGLIQVNMVHFTEIMQLA). Over 392 to 401 (YRLFTFLKSH) the chain is Extracellular.

It belongs to the insect chemoreceptor superfamily. Heteromeric odorant receptor channel (TC 1.A.69) family. Or49a subfamily. As to quaternary structure, interacts with Orco. Complexes exist early in the endomembrane system in olfactory sensory neurons (OSNs), coupling these complexes to the conserved ciliary trafficking pathway. In terms of tissue distribution, expressed in olfactory sensory neurons in the antenna.

The protein localises to the cell membrane. Odorant receptor which mediates acceptance or avoidance behavior, depending on its substrates. The odorant receptor repertoire encodes a large collection of odor stimuli that vary widely in identity, intensity, and duration. May form a complex with Orco to form odorant-sensing units, providing sensitive and prolonged odorant signaling and calcium permeability. This Drosophila melanogaster (Fruit fly) protein is Odorant receptor 88a (Or88a).